A 348-amino-acid polypeptide reads, in one-letter code: UDP-glucose 4-epimerase (348 aa).

Residues 12-14 (GYI), 33-37 (DNFHN), 66-67 (DI), Phe-88, and Lys-92 each bind NAD(+). 132–134 (SAT) is a binding site for substrate. Catalysis depends on Tyr-157, which acts as the Proton acceptor. NAD(+) is bound by residues Lys-161 and Tyr-185. Substrate contacts are provided by residues 185–187 (YFN), 206–208 (NNL), 224–226 (NVF), Arg-239, and 300–303 (REGD).

It belongs to the NAD(P)-dependent epimerase/dehydratase family. In terms of assembly, homodimer. The cofactor is NAD(+).

The catalysed reaction is UDP-alpha-D-glucose = UDP-alpha-D-galactose. The enzyme catalyses UDP-N-acetyl-alpha-D-glucosamine = UDP-N-acetyl-alpha-D-galactosamine. It functions in the pathway carbohydrate metabolism; galactose metabolism. Functionally, catalyzes two distinct but analogous reactions: the reversible epimerization of UDP-glucose to UDP-galactose and the reversible epimerization of UDP-N-acetylglucosamine to UDP-N-acetylgalactosamine. The reaction with UDP-Gal plays a critical role in the Leloir pathway of galactose catabolism in which galactose is converted to the glycolytic intermediate glucose 6-phosphate. It contributes to the catabolism of dietary galactose and enables the endogenous biosynthesis of both UDP-Gal and UDP-GalNAc when exogenous sources are limited. Both UDP-sugar interconversions are important in the synthesis of glycoproteins and glycolipids. The chain is UDP-glucose 4-epimerase from Homo sapiens (Human).